Reading from the N-terminus, the 210-residue chain is Kalata-B2 (210 aa).

The first 22 residues, 1-22 (MAKFTNCLVLSLLLAAFVGAFG), serve as a signal peptide directing secretion. Residues 23 to 66 (AEFSEADKATLVNDIAENIQKEILGEVKTSETVLTMFLKEMQLK) constitute a propeptide that is removed on maturation. A cross-link (cyclopeptide (Gly-Asp)) is located at residues 67–95 (GLPVCGETCFGGTCNTPGCSCTWPICTRD). Disulfide bonds link Cys-71–Cys-85, Cys-75–Cys-87, and Cys-80–Cys-92. A propeptide spanning residues 96–120 (SLPMRAGGKTSETTLHMFLKEMQLK) is cleaved from the precursor. Residues 121-149 (GLPVCGETCFGGTCNTPGCSCTWPICTRD) constitute a cross-link (cyclopeptide (Gly-Asp)). 3 disulfide bridges follow: Cys-125-Cys-139, Cys-129-Cys-141, and Cys-134-Cys-146. Residues 150–174 (SLPMSAGGKTSETTLHMFLKEMQLK) constitute a propeptide that is removed on maturation. The segment at residues 175-203 (GLPVCGETCFGGTCNTPGCSCTWPICTRD) is a cross-link (cyclopeptide (Gly-Asp)). 3 disulfide bridges follow: Cys-179-Cys-193, Cys-183-Cys-195, and Cys-188-Cys-200. Residues 204 to 210 (SLPLVAA) constitute a propeptide that is removed on maturation.

It belongs to the cyclotide family. Moebius subfamily. Post-translationally, kalata-B2 is a cyclic peptide which occurs in three forms: with unmodified Trp, with Trp oxidized to form N-formylkynurenine and with Trp oxidized to form kynurenine. Oxidation is enhanced by exposure to sunlight.

Its function is as follows. Probably participates in a plant defense mechanism. Inhibitory effect on the growth and development of larvae from Helicoverpa punctigera. Has hemolytic activity. In Oldenlandia affinis, this protein is Kalata-B2 (OAK4).